The sequence spans 551 residues: Cytochrome c oxidase subunit 1 (551 aa).

The chain crosses the membrane as a helical span at residues 34-54 (TLYLYSGVWGGLFGASLSLMI). G62 serves as a coordination point for Ca(2+). H79 is a binding site for Fe(II)-heme a. 6 helical membrane-spanning segments follow: residues 81 to 101 (LMMI…NWLI), 126 to 146 (ALYL…GWTI), 163 to 183 (VLIV…INFA), 209 to 229 (TAVL…MILF), 252 to 272 (LFWF…FGVM), and 285 to 305 (VFGL…GCMV). H258 lines the Cu cation pocket. Positions 258-262 (HPEVY) form a cross-link, 1'-histidyl-3'-tyrosine (His-Tyr). Y262 is a binding site for O2. Residues H308 and H309 each contribute to the Cu cation site. The next 2 membrane-spanning stretches (helical) occupy residues 326-346 (ATMV…ATMA) and 356-376 (AYWS…GVLL). Residues H386 and D387 each coordinate Mg(2+). Transmembrane regions (helical) follow at residues 391-411 (VVAH…FCGL), 432-452 (FMAM…LGLS), and 475-495 (GSAV…EALV). H394 contributes to the heme a3 binding site. A Fe(II)-heme a-binding site is contributed by H396.

Belongs to the heme-copper respiratory oxidase family. Component of the cytochrome c oxidase (complex IV, CIV), a multisubunit enzyme composed of a catalytic core of 3 subunits and several supernumerary subunits. The complex exists as a monomer or a dimer and forms supercomplexes (SCs) in the inner mitochondrial membrane with ubiquinol-cytochrome c oxidoreductase (cytochrome b-c1 complex, complex III, CIII). Heme is required as a cofactor. It depends on Cu cation as a cofactor.

It is found in the mitochondrion inner membrane. The enzyme catalyses 4 Fe(II)-[cytochrome c] + O2 + 8 H(+)(in) = 4 Fe(III)-[cytochrome c] + 2 H2O + 4 H(+)(out). It functions in the pathway energy metabolism; oxidative phosphorylation. Functionally, component of the cytochrome c oxidase, the last enzyme in the mitochondrial electron transport chain which drives oxidative phosphorylation. The respiratory chain contains 3 multisubunit complexes succinate dehydrogenase (complex II, CII), ubiquinol-cytochrome c oxidoreductase (cytochrome b-c1 complex, complex III, CIII) and cytochrome c oxidase (complex IV, CIV), that cooperate to transfer electrons derived from NADH and succinate to molecular oxygen, creating an electrochemical gradient over the inner membrane that drives transmembrane transport and the ATP synthase. Cytochrome c oxidase is the component of the respiratory chain that catalyzes the reduction of oxygen to water. Electrons originating from reduced cytochrome c in the intermembrane space (IMS) are transferred via the dinuclear copper A center (CU(A)) of subunit 2 and heme A of subunit 1 to the active site in subunit 1, a binuclear center (BNC) formed by heme A3 and copper B (CU(B)). The BNC reduces molecular oxygen to 2 water molecules using 4 electrons from cytochrome c in the IMS and 4 protons from the mitochondrial matrix. The polypeptide is Cytochrome c oxidase subunit 1 (COI) (Mytilus edulis (Blue mussel)).